The sequence spans 283 residues: Pantothenate synthetase (283 aa).

Position 31–38 (31–38 (MGALHDGH)) interacts with ATP. H38 serves as the catalytic Proton donor. Residue Q62 coordinates (R)-pantoate. Q62 is a beta-alanine binding site. 148–151 (GKKD) contacts ATP. Q154 lines the (R)-pantoate pocket. ATP is bound by residues V177 and 185–188 (KSSR).

The protein belongs to the pantothenate synthetase family. As to quaternary structure, homodimer.

The protein localises to the cytoplasm. It carries out the reaction (R)-pantoate + beta-alanine + ATP = (R)-pantothenate + AMP + diphosphate + H(+). It participates in cofactor biosynthesis; (R)-pantothenate biosynthesis; (R)-pantothenate from (R)-pantoate and beta-alanine: step 1/1. Functionally, catalyzes the condensation of pantoate with beta-alanine in an ATP-dependent reaction via a pantoyl-adenylate intermediate. This chain is Pantothenate synthetase, found in Staphylococcus aureus (strain bovine RF122 / ET3-1).